A 456-amino-acid polypeptide reads, in one-letter code: tRNA-2-methylthio-N(6)-dimethylallyladenosine synthase (456 aa).

One can recognise an MTTase N-terminal domain in the interval 2-119; it reads KKVFIKTYGC…LPDLIAARRR (118 aa). [4Fe-4S] cluster contacts are provided by cysteine 11, cysteine 48, cysteine 82, cysteine 156, cysteine 160, and cysteine 163. A Radical SAM core domain is found at 142-375; the sequence is RVDGASAYVS…QATIEENVAR (234 aa). A TRAM domain is found at 378–448; it reads QGMVGSVQRI…PHSLRGEVAE (71 aa).

It belongs to the methylthiotransferase family. MiaB subfamily. Monomer. Requires [4Fe-4S] cluster as cofactor.

The protein resides in the cytoplasm. It carries out the reaction N(6)-dimethylallyladenosine(37) in tRNA + (sulfur carrier)-SH + AH2 + 2 S-adenosyl-L-methionine = 2-methylsulfanyl-N(6)-dimethylallyladenosine(37) in tRNA + (sulfur carrier)-H + 5'-deoxyadenosine + L-methionine + A + S-adenosyl-L-homocysteine + 2 H(+). Functionally, catalyzes the methylthiolation of N6-(dimethylallyl)adenosine (i(6)A), leading to the formation of 2-methylthio-N6-(dimethylallyl)adenosine (ms(2)i(6)A) at position 37 in tRNAs that read codons beginning with uridine. The chain is tRNA-2-methylthio-N(6)-dimethylallyladenosine synthase from Ralstonia pickettii (strain 12J).